Consider the following 474-residue polypeptide: Glutathione synthetase (474 aa).

A2 is modified (N-acetylalanine). R125 contacts substrate. ATP is bound at residue E144. 2 residues coordinate Mg(2+): E144 and N146. Substrate is bound by residues 148–151 (ISAS), 214–216 (ERN), Q220, and 267–270 (RDGY). Residues K305, 364–373 (KPQREGGGNN), Y375, and 398–401 (MEKT) each bind ATP. E368 provides a ligand contact to Mg(2+). S415 is subject to Phosphoserine. Residue E425 participates in ATP binding. Substrate is bound at residue R450. K452 and D458 together coordinate ATP. Position 461–462 (461–462 (VA)) interacts with substrate.

It belongs to the eukaryotic GSH synthase family. As to quaternary structure, homodimer. The cofactor is Mg(2+).

It catalyses the reaction gamma-L-glutamyl-L-cysteine + glycine + ATP = glutathione + ADP + phosphate + H(+). It participates in sulfur metabolism; glutathione biosynthesis; glutathione from L-cysteine and L-glutamate: step 2/2. Functionally, catalyzes the production of glutathione from gamma-glutamylcysteine and glycine in an ATP-dependent manner. Glutathione (gamma-glutamylcysteinylglycine, GSH) is the most abundant intracellular thiol in living aerobic cells and is required for numerous processes including the protection of cells against oxidative damage, amino acid transport, the detoxification of foreign compounds, the maintenance of protein sulfhydryl groups in a reduced state and acts as a cofactor for a number of enzymes. This is Glutathione synthetase (GSS) from Macaca fascicularis (Crab-eating macaque).